The chain runs to 223 residues: Translation initiation factor 6 (223 aa).

Belongs to the eIF-6 family. As to quaternary structure, associates with the 50S ribosomal subunit, specifically with protein L14. Binds to 23S rRNA, possibly between where the 30S and 50S subunits associate to initiate translation. Post-translationally, modified in an unknown fashion (not phosphorylation) following release from 50S ribosomal subunits.

In terms of biological role, binds to the 50S ribosomal subunit and prevents its association with the 30S ribosomal subunit to form the 70S initiation complex. Inhibits translation of both leadered and leaderless mRNAs, maybe by binding to the 50S ribosome subunit, preventing it from binding to the 30S subunit. In Saccharolobus solfataricus (strain ATCC 35092 / DSM 1617 / JCM 11322 / P2) (Sulfolobus solfataricus), this protein is Translation initiation factor 6.